A 316-amino-acid chain; its full sequence is tRNA dimethylallyltransferase (316 aa).

17-24 lines the ATP pocket; sequence GPTASGKT. 19–24 provides a ligand contact to substrate; it reads TASGKT. Interaction with substrate tRNA regions lie at residues 42-45, 166-170, and 247-252; these read DSAL, QRLSR, and RCVGYR.

Belongs to the IPP transferase family. As to quaternary structure, monomer. The cofactor is Mg(2+).

The catalysed reaction is adenosine(37) in tRNA + dimethylallyl diphosphate = N(6)-dimethylallyladenosine(37) in tRNA + diphosphate. Its function is as follows. Catalyzes the transfer of a dimethylallyl group onto the adenine at position 37 in tRNAs that read codons beginning with uridine, leading to the formation of N6-(dimethylallyl)adenosine (i(6)A). The sequence is that of tRNA dimethylallyltransferase from Salmonella typhi.